The primary structure comprises 189 residues: MTKLPYALLDKGSLLVASPDVNGGIFSRSVVLLCEHSPNGSFGLILNKILEIDSPEEIFPLDHFDESKVRFCMGGPLQANQIMLLHTSPDSANSSIEICPSVFLGGDFSFAGEKEGRTRDDKMLLCFGYSGWQGGQLEKEFLEGLWFLAPSSQEIIFTDAPERMWSDVLQHLGGRFASLSTIPENLLLN.

This sequence belongs to the UPF0301 (AlgH) family.

In Chlamydia trachomatis serovar L2b (strain UCH-1/proctitis), this protein is UPF0301 protein CTLon_0458.